We begin with the raw amino-acid sequence, 946 residues long: MSISMKDVDPAFRGVGQKDGLEVWRIENFKPVPVPTSSHGKFYMGDSYIILKTTALKNGSFRHDLHYWLGKDTSQDEAGTAAILTVELDAALGGRAVQYREVQGGETEKLLSYFRPCIMPQPGGVASGFNHVEVNQQDHVTRLYVCQGKHVVHVKEVPFVRSSLNHEDIFILDTANKIFQFNGSNSCIQERAKALEVVQYIKDTFHEGKCEVAAVEDGKLMADTEAGEFWGLFGGFAPLPKKTSSEDNGDDKETVTKLLCFNQGTLEHISFESLEHELLETNKCYLLDCGAEMYVWMGRGTSLQVRKGASEAAEKLLIDENRKGSNVIKVIEGFETIMFKSKFNKWPPTPDLKLSSEDGRGKVAALLRSQGLDVKGLMKAAPEEEEPQPYIDCTGHLQVWRVNGDGKTLLSSSDQSKLYTGDCYIFQYTYTGDDKEECLIGTWFGKKSVEEDRTSAISLASKMFQAAKFQAAQARLYEGKEPIQFFVIFQSLQVFKGGLSSGYKNFIAVNGTDDDTYVEGGLALFRIQGSGSENMQAIQVDAVSSSLNSSYCYILHNGNTVFTWTGNLTTSLDNDLVERQLDVIKPDLPSRSQKEGRETDQFWELLGGKCKYSNKKIGKENESDPHLFSCILSKENLKVKEIHHFTQDDLMAEDIFVLDCRTDLFVWVGQEVDAKLRSQAMDIGEKFLLHDFLMENLSQDTPIFIVTEGSEPQFFTRFFTWDSAKSLMHGSSYQRKLAIVKGGATPSLDKPKRRTPAFSGRNAGQDKSQQRTRSMSHSPERHRIRGRSPAFTAIASAFENPSTRYLSTPPPAVKKLFPRSGGSELPKTSSKQSAINALTSAFEGPTKSTIPKSVKASPEAEKAIQEEGSTIGESENEPEDDENSTIYPYERLTTTSDDPAPDIDVTKREVYLSSVEFTEKFGMTRASFKNLPKWKQNRLKSDLQLF.

Gelsolin-like repeat units follow at residues 28–109, 152–219, 274–339, and 641–715; these read NFKP…ETEK, VHVK…EDGK, LEHE…TIMF, and EIHH…PQFF. 3 disordered regions span residues 744–789, 801–832, and 844–902; these read ATPS…GRSP, PSTR…SSKQ, and GPTK…PAPD. A compositionally biased stretch (polar residues) spans 765–777; it reads QDKSQQRTRSMSH. Residues 874 to 883 show a composition bias toward acidic residues; it reads SENEPEDDEN. The HP domain occupies 881–946; that stretch reads DENSTIYPYE…NRLKSDLQLF (66 aa).

It belongs to the villin/gelsolin family.

It is found in the cytoplasm. The protein resides in the cytoskeleton. In terms of biological role, ca(2+)-regulated actin-binding protein. Binds actin microfilaments (MFs). Involved in actin filament bundling, severing and capping. Caps the barbed end of actin filaments and is able to sever them in a calcium-dependent manner. This chain is Villin-4, found in Oryza sativa subsp. japonica (Rice).